We begin with the raw amino-acid sequence, 519 residues long: Bifunctional pantoate ligase/cytidylate kinase (519 aa).

A pantoate--beta-alanine ligase region spans residues 1-282 (MNLTILRTKT…CGNTRLIDHG (282 aa)). 30 to 37 (MGGLHQGH) contributes to the ATP binding site. The active-site Proton donor is His-37. A (R)-pantoate-binding site is contributed by Gln-66. Gln-66 provides a ligand contact to beta-alanine. 155 to 158 (GEKD) contacts ATP. Gln-161 serves as a coordination point for (R)-pantoate. 192–195 (CSSR) serves as a coordination point for ATP. The cytidylate kinase stretch occupies residues 283–519 (FLMKRNPIVA…PQEVWPTNAT (237 aa)).

It in the N-terminal section; belongs to the pantothenate synthetase family. This sequence in the C-terminal section; belongs to the cytidylate kinase family. Type 1 subfamily.

It localises to the cytoplasm. The catalysed reaction is (R)-pantoate + beta-alanine + ATP = (R)-pantothenate + AMP + diphosphate + H(+). The enzyme catalyses CMP + ATP = CDP + ADP. It catalyses the reaction dCMP + ATP = dCDP + ADP. It functions in the pathway cofactor biosynthesis; (R)-pantothenate biosynthesis; (R)-pantothenate from (R)-pantoate and beta-alanine: step 1/1. Functionally, catalyzes the condensation of pantoate with beta-alanine in an ATP-dependent reaction via a pantoyl-adenylate intermediate. Catalyzes the transfer of a phosphate group from ATP to either CMP or dCMP to form CDP or dCDP and ADP, respectively. This chain is Bifunctional pantoate ligase/cytidylate kinase, found in Prochlorococcus marinus (strain SARG / CCMP1375 / SS120).